Here is a 679-residue protein sequence, read N- to C-terminus: DNA-directed RNA polymerase subunit beta' (679 aa).

Residues cysteine 69, cysteine 71, cysteine 87, and cysteine 90 each contribute to the Zn(2+) site. Mg(2+) contacts are provided by aspartate 489, aspartate 491, and aspartate 493.

The protein belongs to the RNA polymerase beta' chain family. RpoC1 subfamily. As to quaternary structure, in plastids the minimal PEP RNA polymerase catalytic core is composed of four subunits: alpha, beta, beta', and beta''. When a (nuclear-encoded) sigma factor is associated with the core the holoenzyme is formed, which can initiate transcription. Requires Mg(2+) as cofactor. It depends on Zn(2+) as a cofactor.

Its subcellular location is the plastid. It is found in the chloroplast. It catalyses the reaction RNA(n) + a ribonucleoside 5'-triphosphate = RNA(n+1) + diphosphate. Its function is as follows. DNA-dependent RNA polymerase catalyzes the transcription of DNA into RNA using the four ribonucleoside triphosphates as substrates. This is DNA-directed RNA polymerase subunit beta' from Oenothera argillicola (Appalachian evening primrose).